A 281-amino-acid polypeptide reads, in one-letter code: Succinate dehydrogenase [ubiquinone] iron-sulfur subunit 1, mitochondrial (281 aa).

The transit peptide at 1–25 (MAAAALLRRSPAARALLSPALSSRL) directs the protein to the mitochondrion. Residues 26-48 (VASKPHSSSPAPPPPPSKAGANT) are disordered. The 2Fe-2S ferredoxin-type domain occupies 49-141 (KTFSIYRWDP…ASTISPLPHM (93 aa)). [2Fe-2S] cluster is bound by residues C102, C107, and C122. The 4Fe-4S ferredoxin-type domain maps to 184–214 (DRAKLDGMYECILCACCSTSCPSYWWNPEEY). [4Fe-4S] cluster is bound by residues C194, C197, and C200. C204 lines the [3Fe-4S] cluster pocket. Residue W209 coordinates a ubiquinone. [3Fe-4S] cluster contacts are provided by C251 and C257. C261 lines the [4Fe-4S] cluster pocket.

This sequence belongs to the succinate dehydrogenase/fumarate reductase iron-sulfur protein family. As to quaternary structure, component of complex II composed of eight subunits in plants: four classical SDH subunits SDH1, SDH2, SDH3 and SDH4 (a flavoprotein (FP), an iron-sulfur protein (IP), and a cytochrome b composed of a large and a small subunit.), as well as four subunits unknown in mitochondria from bacteria and heterotrophic eukaryotes. The cofactor is [2Fe-2S] cluster. Requires [3Fe-4S] cluster as cofactor. It depends on [4Fe-4S] cluster as a cofactor.

It localises to the mitochondrion inner membrane. The enzyme catalyses a quinone + succinate = fumarate + a quinol. It participates in carbohydrate metabolism; tricarboxylic acid cycle; fumarate from succinate (eukaryal route): step 1/1. Its function is as follows. Iron-sulfur protein (IP) subunit of succinate dehydrogenase (SDH) that is involved in complex II of the mitochondrial electron transport chain and is responsible for transferring electrons from succinate to ubiquinone (coenzyme Q). The sequence is that of Succinate dehydrogenase [ubiquinone] iron-sulfur subunit 1, mitochondrial from Oryza sativa subsp. japonica (Rice).